We begin with the raw amino-acid sequence, 734 residues long: Photosystem I P700 chlorophyll a apoprotein A2 (734 aa).

The next 8 helical transmembrane spans lie at 46 to 69, 135 to 158, 175 to 199, 273 to 291, 330 to 353, 369 to 395, 417 to 439, and 517 to 535; these read IFAS…FHVA, LYTG…LHLQ, LNHH…HVAI, MAHH…GHMY, IHFQ…QHMY, AALY…IFFI, AIIS…LYVH, and FLVH…LILV. [4Fe-4S] cluster is bound by residues Cys559 and Cys568. The next 2 helical transmembrane spans lie at 575-596 and 643-665; these read AFYL…YWHW and LSVW…MFLI. The chlorophyll a site is built by His654, Met662, and Tyr670. A phylloquinone-binding site is contributed by Trp671. Residues 707–727 traverse the membrane as a helical segment; the sequence is LVGLAHFSVGYIFTYAAFLIA.

Belongs to the PsaA/PsaB family. In terms of assembly, the PsaA/B heterodimer binds the P700 chlorophyll special pair and subsequent electron acceptors. PSI consists of a core antenna complex that captures photons, and an electron transfer chain that converts photonic excitation into a charge separation. The eukaryotic PSI reaction center is composed of at least 11 subunits. P700 is a chlorophyll a/chlorophyll a' dimer, A0 is one or more chlorophyll a, A1 is one or both phylloquinones and FX is a shared 4Fe-4S iron-sulfur center. serves as cofactor.

Its subcellular location is the plastid. It localises to the chloroplast thylakoid membrane. It catalyses the reaction reduced [plastocyanin] + hnu + oxidized [2Fe-2S]-[ferredoxin] = oxidized [plastocyanin] + reduced [2Fe-2S]-[ferredoxin]. Functionally, psaA and PsaB bind P700, the primary electron donor of photosystem I (PSI), as well as the electron acceptors A0, A1 and FX. PSI is a plastocyanin-ferredoxin oxidoreductase, converting photonic excitation into a charge separation, which transfers an electron from the donor P700 chlorophyll pair to the spectroscopically characterized acceptors A0, A1, FX, FA and FB in turn. Oxidized P700 is reduced on the lumenal side of the thylakoid membrane by plastocyanin. In Draba nemorosa (Woodland whitlowgrass), this protein is Photosystem I P700 chlorophyll a apoprotein A2.